The sequence spans 260 residues: Thiazole synthase (260 aa).

Lysine 96 acts as the Schiff-base intermediate with DXP in catalysis. 1-deoxy-D-xylulose 5-phosphate contacts are provided by residues glycine 157, 184 to 185, and 206 to 207; these read AG and NT.

It belongs to the ThiG family. As to quaternary structure, homotetramer. Forms heterodimers with either ThiH or ThiS.

The protein localises to the cytoplasm. The enzyme catalyses [ThiS sulfur-carrier protein]-C-terminal-Gly-aminoethanethioate + 2-iminoacetate + 1-deoxy-D-xylulose 5-phosphate = [ThiS sulfur-carrier protein]-C-terminal Gly-Gly + 2-[(2R,5Z)-2-carboxy-4-methylthiazol-5(2H)-ylidene]ethyl phosphate + 2 H2O + H(+). Its pathway is cofactor biosynthesis; thiamine diphosphate biosynthesis. Functionally, catalyzes the rearrangement of 1-deoxy-D-xylulose 5-phosphate (DXP) to produce the thiazole phosphate moiety of thiamine. Sulfur is provided by the thiocarboxylate moiety of the carrier protein ThiS. In vitro, sulfur can be provided by H(2)S. The polypeptide is Thiazole synthase (Rhodopseudomonas palustris (strain ATCC BAA-98 / CGA009)).